The primary structure comprises 232 residues: Aspartate/glutamate leucyltransferase (232 aa).

Belongs to the R-transferase family. Bpt subfamily.

Its subcellular location is the cytoplasm. The enzyme catalyses N-terminal L-glutamyl-[protein] + L-leucyl-tRNA(Leu) = N-terminal L-leucyl-L-glutamyl-[protein] + tRNA(Leu) + H(+). It carries out the reaction N-terminal L-aspartyl-[protein] + L-leucyl-tRNA(Leu) = N-terminal L-leucyl-L-aspartyl-[protein] + tRNA(Leu) + H(+). In terms of biological role, functions in the N-end rule pathway of protein degradation where it conjugates Leu from its aminoacyl-tRNA to the N-termini of proteins containing an N-terminal aspartate or glutamate. This is Aspartate/glutamate leucyltransferase from Vibrio vulnificus (strain YJ016).